The sequence spans 143 residues: Putative pre-16S rRNA nuclease (143 aa).

It belongs to the YqgF nuclease family.

Its subcellular location is the cytoplasm. Functionally, could be a nuclease involved in processing of the 5'-end of pre-16S rRNA. This Leuconostoc mesenteroides subsp. mesenteroides (strain ATCC 8293 / DSM 20343 / BCRC 11652 / CCM 1803 / JCM 6124 / NCDO 523 / NBRC 100496 / NCIMB 8023 / NCTC 12954 / NRRL B-1118 / 37Y) protein is Putative pre-16S rRNA nuclease.